The chain runs to 611 residues: Dihydroxy-acid dehydratase (611 aa).

A Mg(2+)-binding site is contributed by aspartate 81. [2Fe-2S] cluster is bound at residue cysteine 122. Mg(2+) is bound by residues aspartate 123 and lysine 124. Lysine 124 is subject to N6-carboxylysine. A [2Fe-2S] cluster-binding site is contributed by cysteine 195. Glutamate 491 is a binding site for Mg(2+). The Proton acceptor role is filled by serine 517.

The protein belongs to the IlvD/Edd family. As to quaternary structure, homodimer. It depends on [2Fe-2S] cluster as a cofactor. Requires Mg(2+) as cofactor.

It carries out the reaction (2R)-2,3-dihydroxy-3-methylbutanoate = 3-methyl-2-oxobutanoate + H2O. The catalysed reaction is (2R,3R)-2,3-dihydroxy-3-methylpentanoate = (S)-3-methyl-2-oxopentanoate + H2O. It functions in the pathway amino-acid biosynthesis; L-isoleucine biosynthesis; L-isoleucine from 2-oxobutanoate: step 3/4. The protein operates within amino-acid biosynthesis; L-valine biosynthesis; L-valine from pyruvate: step 3/4. Its function is as follows. Functions in the biosynthesis of branched-chain amino acids. Catalyzes the dehydration of (2R,3R)-2,3-dihydroxy-3-methylpentanoate (2,3-dihydroxy-3-methylvalerate) into 2-oxo-3-methylpentanoate (2-oxo-3-methylvalerate) and of (2R)-2,3-dihydroxy-3-methylbutanoate (2,3-dihydroxyisovalerate) into 2-oxo-3-methylbutanoate (2-oxoisovalerate), the penultimate precursor to L-isoleucine and L-valine, respectively. This is Dihydroxy-acid dehydratase from Brucella anthropi (strain ATCC 49188 / DSM 6882 / CCUG 24695 / JCM 21032 / LMG 3331 / NBRC 15819 / NCTC 12168 / Alc 37) (Ochrobactrum anthropi).